The primary structure comprises 136 residues: Small nuclear ribonucleoprotein Sm D3 (136 aa).

The Sm domain occupies 6–78; that stretch reads VPIKILHEAE…IRFMILPDML (73 aa). A disordered region spans residues 98-136; that stretch reads GLGGLDQRGRGRGTAFRRPMGRGGPRGMSRPGGAPTFRG.

Belongs to the snRNP core protein family.

It is found in the nucleus. It localises to the cytoplasm. The protein localises to the cytosol. Functionally, plays a role in pre-mRNA splicing as a core component of the spliceosomal U1, U2, U4 and U5 small nuclear ribonucleoproteins (snRNPs), the building blocks of the spliceosome. This Caenorhabditis elegans protein is Small nuclear ribonucleoprotein Sm D3 (snr-1).